The primary structure comprises 290 residues: 4-diphosphocytidyl-2-C-methyl-D-erythritol kinase (290 aa).

Lys-10 is an active-site residue. 95 to 105 (PVAAGLAGGSS) is an ATP binding site. Asp-137 is a catalytic residue.

The protein belongs to the GHMP kinase family. IspE subfamily.

The catalysed reaction is 4-CDP-2-C-methyl-D-erythritol + ATP = 4-CDP-2-C-methyl-D-erythritol 2-phosphate + ADP + H(+). The protein operates within isoprenoid biosynthesis; isopentenyl diphosphate biosynthesis via DXP pathway; isopentenyl diphosphate from 1-deoxy-D-xylulose 5-phosphate: step 3/6. Catalyzes the phosphorylation of the position 2 hydroxy group of 4-diphosphocytidyl-2C-methyl-D-erythritol. The sequence is that of 4-diphosphocytidyl-2-C-methyl-D-erythritol kinase from Geobacillus thermodenitrificans (strain NG80-2).